Reading from the N-terminus, the 402-residue chain is Tryptophan synthase beta chain (402 aa).

Lys-91 bears the N6-(pyridoxal phosphate)lysine mark.

Belongs to the TrpB family. Tetramer of two alpha and two beta chains. Requires pyridoxal 5'-phosphate as cofactor.

The catalysed reaction is (1S,2R)-1-C-(indol-3-yl)glycerol 3-phosphate + L-serine = D-glyceraldehyde 3-phosphate + L-tryptophan + H2O. It functions in the pathway amino-acid biosynthesis; L-tryptophan biosynthesis; L-tryptophan from chorismate: step 5/5. The beta subunit is responsible for the synthesis of L-tryptophan from indole and L-serine. The polypeptide is Tryptophan synthase beta chain (Streptococcus thermophilus (strain ATCC BAA-491 / LMD-9)).